Here is a 1340-residue protein sequence, read N- to C-terminus: Thioester-containing protein 1 allele S1 (1340 aa).

The N-terminal stretch at 1-21 is a signal peptide; sequence MWQFIRSRILTVIIFIGAAHG. 5 N-linked (GlcNAc...) asparagine glycosylation sites follow: Asn-68, Asn-199, Asn-242, Asn-312, and Asn-481. Positions 580-609 are may contain the cleavage site; it reads ENEFDIFHSLGLFARTLDDILFDSANEKTG. N-linked (GlcNAc...) asparagine glycans are attached at residues Asn-637, Asn-728, Asn-813, and Asn-828. Residues 859–862 constitute a cross-link (isoglutamyl cysteine thioester (Cys-Gln)); sequence CGEQ. Disulfide bonds link Cys-1217-Cys-1283, Cys-1326-Cys-1338, and Cys-1329-Cys-1334.

In terms of assembly, heterodimer of a TEP1-N chain and an TEP1-C chain non-covalently linked. Forms a complex composed of TEP1-N and TEP1-C heterodimer, LRIM1 and APL1C; the interaction stabilizes TEP1-N and TEP1-C heterodimer, prevents its binding to tissues while circulating in the hemolymph and protects the thioester bond from hydrolysis. Mature TEP1 and to a lesser extent full-length TEP1 interact with SPCLIP1; the interaction is induced by microbial infection. Post-translationally, in the hemolymph, the full-length protein is cleaved by an unknow protease into a 75kDa N-terminal (TEP1-N) chain and an 80kDa C-terminal (TEP1-C) chain which remain non-covalently linked. The TEP1-C chain contains the thioester bond which covalently binds to the pathogen surface. Cleavage is induced by bacterial infection or aseptic wound injury. During embryonic and pupal development, the cleaved form is the predominant form. In terms of processing, N-glycosylated. Specifically expressed in hemocytes (at protein level).

The protein localises to the secreted. Plays an essential role in the innate immune response to bacteria and protozoa infection. After proteolytic cleavage, the protein C-terminus binds covalently through a thioester bond to the pathogen surface resulting in pathogen clearance either by melanization or lysis. Initiate the recruitment and activation of a cascade of proteases, mostly of CLIP-domain serine proteases, which leads to the proteolytic cleavage of the prophenoloxidase (PPO) into active phenoloxidase (PO), the rate-limiting enzyme in melanin biosynthesis. In response to parasite P.berghei-mediated infection, binds to and mediates killing of ookinetes, as they egress from midgut epithelial cells into the basal labyrinth, by both lysis and melanization. During bacterial infection, binds to both Gram-positive and Gram-negative bacteria but only promotes phagocytosis of Gram-negative bacteria. Promotes the accumulation of SPCLIP1 onto the surface of P.berghei ookinetes and bacterium E.coli which leads to the melanization of the pathogen. Recruits CLIPA2 to bacteria surface. In response to bacterial infection, required for periostial hemocyte aggregation, but not for the aggregation of sessile hemocytes in non-periostial regions. During the late stage of fungus B.bassiana-mediated infection, required for the initiation of hyphae melanization by binding to the surface of hyphae and recruiting prophenoloxidase PPO to them. Plays a role in male fertility by binding to defective sperm cells and promoting their removal during spermatogenesis. In terms of biological role, binds covalently through a thioester bond to the pathogen surface resulting in pathogen clearance. The sequence is that of Thioester-containing protein 1 allele S1 from Anopheles gambiae (African malaria mosquito).